The primary structure comprises 227 residues: MAYPFQLGLQDATSPIMEELTNFHDHTLMIVFLISSLVLYLISLMLSTKLIHTSTMDAQEVETIWTILPAIILIMIALPSLRILYMMDEINNPALTVKTMGHQWYWSYEYTDYEDLSFDSYMIPTNELKPGELRLLEVDNRVILPMELPIRMLISSEDVLHSWAVPSLGLKTDAIPGRLNQATVMSNRPGIFYGQCSEICGSNHSFMPIVLEMIPLKLFENWSISMS.

Residues 1 to 14 lie on the Mitochondrial intermembrane side of the membrane; it reads MAYPFQLGLQDATS. The helical transmembrane segment at 15–45 threads the bilayer; the sequence is PIMEELTNFHDHTLMIVFLISSLVLYLISLM. The Mitochondrial matrix portion of the chain corresponds to 46–59; sequence LSTKLIHTSTMDAQ. A helical transmembrane segment spans residues 60–87; that stretch reads EVETIWTILPAIILIMIALPSLRILYMM. At 88-227 the chain is on the mitochondrial intermembrane side; the sequence is DEINNPALTV…LFENWSISMS (140 aa). Positions 161, 196, 198, 200, 204, and 207 each coordinate Cu cation. Position 198 (glutamate 198) interacts with Mg(2+).

The protein belongs to the cytochrome c oxidase subunit 2 family. As to quaternary structure, component of the cytochrome c oxidase (complex IV, CIV), a multisubunit enzyme composed of 14 subunits. The complex is composed of a catalytic core of 3 subunits MT-CO1, MT-CO2 and MT-CO3, encoded in the mitochondrial DNA, and 11 supernumerary subunits COX4I, COX5A, COX5B, COX6A, COX6B, COX6C, COX7A, COX7B, COX7C, COX8 and NDUFA4, which are encoded in the nuclear genome. The complex exists as a monomer or a dimer and forms supercomplexes (SCs) in the inner mitochondrial membrane with NADH-ubiquinone oxidoreductase (complex I, CI) and ubiquinol-cytochrome c oxidoreductase (cytochrome b-c1 complex, complex III, CIII), resulting in different assemblies (supercomplex SCI(1)III(2)IV(1) and megacomplex MCI(2)III(2)IV(2)). Found in a complex with TMEM177, COA6, COX18, COX20, SCO1 and SCO2. Interacts with TMEM177 in a COX20-dependent manner. Interacts with COX20. Interacts with COX16. The cofactor is Cu cation.

The protein localises to the mitochondrion inner membrane. The enzyme catalyses 4 Fe(II)-[cytochrome c] + O2 + 8 H(+)(in) = 4 Fe(III)-[cytochrome c] + 2 H2O + 4 H(+)(out). Functionally, component of the cytochrome c oxidase, the last enzyme in the mitochondrial electron transport chain which drives oxidative phosphorylation. The respiratory chain contains 3 multisubunit complexes succinate dehydrogenase (complex II, CII), ubiquinol-cytochrome c oxidoreductase (cytochrome b-c1 complex, complex III, CIII) and cytochrome c oxidase (complex IV, CIV), that cooperate to transfer electrons derived from NADH and succinate to molecular oxygen, creating an electrochemical gradient over the inner membrane that drives transmembrane transport and the ATP synthase. Cytochrome c oxidase is the component of the respiratory chain that catalyzes the reduction of oxygen to water. Electrons originating from reduced cytochrome c in the intermembrane space (IMS) are transferred via the dinuclear copper A center (CU(A)) of subunit 2 and heme A of subunit 1 to the active site in subunit 1, a binuclear center (BNC) formed by heme A3 and copper B (CU(B)). The BNC reduces molecular oxygen to 2 water molecules using 4 electrons from cytochrome c in the IMS and 4 protons from the mitochondrial matrix. The sequence is that of Cytochrome c oxidase subunit 2 (MT-CO2) from Gerbilliscus robustus (Fringe-tailed gerbil).